We begin with the raw amino-acid sequence, 438 residues long: Tyrosine--tRNA ligase (438 aa).

Tyr47 is an L-tyrosine binding site. Residues 52–61 (PTATSLHVGG) carry the 'HIGH' region motif. Positions 183 and 187 each coordinate L-tyrosine. The 'KMSKS' region signature appears at 243-247 (KMGKT). Lys246 is a binding site for ATP. One can recognise an S4 RNA-binding domain in the interval 370-436 (LWIVEALQTA…GKRKYALLKI (67 aa)).

This sequence belongs to the class-I aminoacyl-tRNA synthetase family. TyrS type 1 subfamily. In terms of assembly, homodimer.

Its subcellular location is the cytoplasm. It carries out the reaction tRNA(Tyr) + L-tyrosine + ATP = L-tyrosyl-tRNA(Tyr) + AMP + diphosphate + H(+). Catalyzes the attachment of tyrosine to tRNA(Tyr) in a two-step reaction: tyrosine is first activated by ATP to form Tyr-AMP and then transferred to the acceptor end of tRNA(Tyr). This is Tyrosine--tRNA ligase from Rhodopirellula baltica (strain DSM 10527 / NCIMB 13988 / SH1).